Reading from the N-terminus, the 100-residue chain is ATP synthase subunit c (100 aa).

A run of 2 helical transmembrane segments spans residues 30–50 (LLYL…GVGM) and 80–100 (AFIE…LFVV).

Belongs to the ATPase C chain family. In terms of assembly, F-type ATPases have 2 components, F(1) - the catalytic core - and F(0) - the membrane proton channel. F(1) has five subunits: alpha(3), beta(3), gamma(1), delta(1), epsilon(1). F(0) has three main subunits: a(1), b(2) and c(10-14). The alpha and beta chains form an alternating ring which encloses part of the gamma chain. F(1) is attached to F(0) by a central stalk formed by the gamma and epsilon chains, while a peripheral stalk is formed by the delta and b chains.

Its subcellular location is the cell inner membrane. Functionally, f(1)F(0) ATP synthase produces ATP from ADP in the presence of a proton or sodium gradient. F-type ATPases consist of two structural domains, F(1) containing the extramembraneous catalytic core and F(0) containing the membrane proton channel, linked together by a central stalk and a peripheral stalk. During catalysis, ATP synthesis in the catalytic domain of F(1) is coupled via a rotary mechanism of the central stalk subunits to proton translocation. Key component of the F(0) channel; it plays a direct role in translocation across the membrane. A homomeric c-ring of between 10-14 subunits forms the central stalk rotor element with the F(1) delta and epsilon subunits. The sequence is that of ATP synthase subunit c from Aquifex aeolicus (strain VF5).